The chain runs to 440 residues: Alpha-methylserine aldolase (440 aa).

K255 is modified (N6-(pyridoxal phosphate)lysine).

The protein belongs to the SHMT family. Alpha-methylserine aldolase subfamily. In terms of assembly, homodimer. The cofactor is pyridoxal 5'-phosphate.

It catalyses the reaction 2-methyl-L-serine = formaldehyde + L-alanine. The enzyme catalyses 2-ethyl-L-serine = (2S)-2-aminobutanoate + formaldehyde. In the alpha-methyl-L-serine synthesis reaction, activity is inhibited by an excess amount of formaldehyde (at a concentration greater than 4 mM). Formaldehyde release activity is reduced by the sulfhydryl reagent N-ethylmaleimide, iodoacetate amide and iodoacetic acid, but not by dithiothreitol and 2-mercaptoethanol. Activity is enhanced by 1 mM of manganese chloride. In terms of biological role, catalyzes the reversible interconversion of alpha-methyl-L-serine to L-alanine and formaldehyde. Can also catalyze the synthesis of alpha-ethyl-L-serine from L-2-aminobutyric acid and formaldehyde. Also shows low alanine racemase activity. Cannot use alpha-methyl-D-serine, L-serine, D-serine, (S)-2-amino-1-propanol, (R)-2-amino-1-propanol, (S)-alpha-hydroxymethyltyrosine, (R)-alpha-hydroxymethyltyrosine, alpha-iso-butyl-DL-serine, alpha-iso-propyl-DL-serine or alpha-benzyl-DL-serine. Cannot use D-alanine instead of L-alanine as the substrate for alpha-methyl-L-serine synthesis. Does not require tetrahydrofolate (THF) for activity. The polypeptide is Alpha-methylserine aldolase (Variovorax paradoxus).